We begin with the raw amino-acid sequence, 235 residues long: Proteasome subunit alpha type-2-B (235 aa).

Residue Lys64 forms a Glycyl lysine isopeptide (Lys-Gly) (interchain with G-Cter in ubiquitin) linkage.

Belongs to the peptidase T1A family. In terms of assembly, component of the 20S core complex of the 26S proteasome. The 26S proteasome is composed of a core protease (CP), known as the 20S proteasome, capped at one or both ends by the 19S regulatory particle (RP/PA700). The 20S proteasome core is composed of 28 subunits that are arranged in four stacked rings, resulting in a barrel-shaped structure. The two end rings are each formed by seven alpha subunits, and the two central rings are each formed by seven beta subunits. The catalytic chamber with the active sites is on the inside of the barrel.

The protein localises to the cytoplasm. It localises to the nucleus. Its function is as follows. The proteasome is a multicatalytic proteinase complex which is characterized by its ability to cleave peptides with Arg, Phe, Tyr, Leu, and Glu adjacent to the leaving group at neutral or slightly basic pH. The proteasome has an ATP-dependent proteolytic activity. The polypeptide is Proteasome subunit alpha type-2-B (PAB2) (Arabidopsis thaliana (Mouse-ear cress)).